The primary structure comprises 435 residues: Cyclin-dependent kinase 14 (435 aa).

Residues 75–92 (RTQSSFDPFEKTSNQPTS) are compositionally biased toward polar residues. Residues 75–97 (RTQSSFDPFEKTSNQPTSPKFGK) are disordered. One can recognise a Protein kinase domain in the interval 101 to 385 (YEKLEKLGEG…AQAALNHDYF (285 aa)). Residues 107 to 115 (LGEGSYATV) and Lys-130 each bind ATP. Catalysis depends on Asp-222, which acts as the Proton acceptor.

It belongs to the protein kinase superfamily. CMGC Ser/Thr protein kinase family. CDC2/CDKX subfamily. In terms of assembly, interacts with ccny; ccny mediates its recruitment to the plasma membrane and promotes phosphorylation of lrp6.

The protein localises to the cell membrane. It carries out the reaction L-seryl-[protein] + ATP = O-phospho-L-seryl-[protein] + ADP + H(+). The catalysed reaction is L-threonyl-[protein] + ATP = O-phospho-L-threonyl-[protein] + ADP + H(+). Serine/threonine-protein kinase involved in the control of the eukaryotic cell cycle, whose activity is controlled by an associated cyclin. Acts as a cell-cycle regulator of Wnt signaling pathway during G2/M phase by mediating the phosphorylation of lrp6, leading to the activation of the Wnt signaling pathway. This chain is Cyclin-dependent kinase 14 (cdk14), found in Xenopus laevis (African clawed frog).